A 343-amino-acid polypeptide reads, in one-letter code: Aspartate carbamoyltransferase catalytic subunit (343 aa).

2 residues coordinate carbamoyl phosphate: Arg-91 and Thr-92. Lys-119 lines the L-aspartate pocket. Residues Arg-141, His-171, and Gln-174 each contribute to the carbamoyl phosphate site. The L-aspartate site is built by Arg-204 and Arg-259. Carbamoyl phosphate contacts are provided by Gly-300 and Pro-301.

It belongs to the aspartate/ornithine carbamoyltransferase superfamily. ATCase family. As to quaternary structure, heterododecamer (2C3:3R2) of six catalytic PyrB chains organized as two trimers (C3), and six regulatory PyrI chains organized as three dimers (R2).

The enzyme catalyses carbamoyl phosphate + L-aspartate = N-carbamoyl-L-aspartate + phosphate + H(+). It functions in the pathway pyrimidine metabolism; UMP biosynthesis via de novo pathway; (S)-dihydroorotate from bicarbonate: step 2/3. Functionally, catalyzes the condensation of carbamoyl phosphate and aspartate to form carbamoyl aspartate and inorganic phosphate, the committed step in the de novo pyrimidine nucleotide biosynthesis pathway. The sequence is that of Aspartate carbamoyltransferase catalytic subunit from Burkholderia orbicola (strain MC0-3).